Reading from the N-terminus, the 141-residue chain is Large ribosomal subunit protein uL11 (141 aa).

Belongs to the universal ribosomal protein uL11 family. Part of the ribosomal stalk of the 50S ribosomal subunit. Interacts with L10 and the large rRNA to form the base of the stalk. L10 forms an elongated spine to which L12 dimers bind in a sequential fashion forming a multimeric L10(L12)X complex. Post-translationally, one or more lysine residues are methylated.

Its function is as follows. Forms part of the ribosomal stalk which helps the ribosome interact with GTP-bound translation factors. This is Large ribosomal subunit protein uL11 from Latilactobacillus sakei subsp. sakei (strain 23K) (Lactobacillus sakei subsp. sakei).